The chain runs to 369 residues: Flagellar P-ring protein (369 aa).

A signal peptide spans 1–22; that stretch reads MFNARRLIAATLLMSCAFGAHA.

Belongs to the FlgI family. The basal body constitutes a major portion of the flagellar organelle and consists of four rings (L,P,S, and M) mounted on a central rod.

Its subcellular location is the periplasm. It localises to the bacterial flagellum basal body. Assembles around the rod to form the L-ring and probably protects the motor/basal body from shearing forces during rotation. The chain is Flagellar P-ring protein from Pseudomonas entomophila (strain L48).